A 490-amino-acid chain; its full sequence is Betaine aldehyde dehydrogenase (490 aa).

2 residues coordinate K(+): I27 and D93. An NAD(+)-binding site is contributed by 150-152 (GAW). K162 (charge relay system) is an active-site residue. Position 176-179 (176-179 (KPSE)) interacts with NAD(+). V180 provides a ligand contact to K(+). 230–233 (GTTT) is a binding site for NAD(+). L246 is a K(+) binding site. E252 functions as the Proton acceptor in the catalytic mechanism. Residues G254, C286, and E387 each coordinate NAD(+). Catalysis depends on C286, which acts as the Nucleophile. C286 carries the post-translational modification Cysteine sulfenic acid (-SOH). Residues K457 and G460 each contribute to the K(+) site. E464 acts as the Charge relay system in catalysis.

The protein belongs to the aldehyde dehydrogenase family. As to quaternary structure, dimer of dimers. The cofactor is K(+).

The enzyme catalyses betaine aldehyde + NAD(+) + H2O = glycine betaine + NADH + 2 H(+). It participates in amine and polyamine biosynthesis; betaine biosynthesis via choline pathway; betaine from betaine aldehyde: step 1/1. Functionally, involved in the biosynthesis of the osmoprotectant glycine betaine. Catalyzes the irreversible oxidation of betaine aldehyde to the corresponding acid. This is Betaine aldehyde dehydrogenase from Pseudomonas putida (strain ATCC 700007 / DSM 6899 / JCM 31910 / BCRC 17059 / LMG 24140 / F1).